Here is a 233-residue protein sequence, read N- to C-terminus: Biosynthetic peptidoglycan transglycosylase (233 aa).

The chain crosses the membrane as a helical span at residues L8–I28.

This sequence belongs to the glycosyltransferase 51 family.

It localises to the cell inner membrane. It catalyses the reaction [GlcNAc-(1-&gt;4)-Mur2Ac(oyl-L-Ala-gamma-D-Glu-L-Lys-D-Ala-D-Ala)](n)-di-trans,octa-cis-undecaprenyl diphosphate + beta-D-GlcNAc-(1-&gt;4)-Mur2Ac(oyl-L-Ala-gamma-D-Glu-L-Lys-D-Ala-D-Ala)-di-trans,octa-cis-undecaprenyl diphosphate = [GlcNAc-(1-&gt;4)-Mur2Ac(oyl-L-Ala-gamma-D-Glu-L-Lys-D-Ala-D-Ala)](n+1)-di-trans,octa-cis-undecaprenyl diphosphate + di-trans,octa-cis-undecaprenyl diphosphate + H(+). It participates in cell wall biogenesis; peptidoglycan biosynthesis. Functionally, peptidoglycan polymerase that catalyzes glycan chain elongation from lipid-linked precursors. This chain is Biosynthetic peptidoglycan transglycosylase, found in Neisseria meningitidis serogroup B (strain ATCC BAA-335 / MC58).